A 425-amino-acid chain; its full sequence is Nicotinate dehydrogenase large molybdopterin subunit (425 aa).

Residues Q208 and 238 to 240 (GFG) each bind Se-Mo-molybdopterin cytosine dinucleotide.

The protein belongs to the xanthine dehydrogenase family. As to quaternary structure, heterooctamer of NDHM, NDHL, NDHS and NDHF. Dimer of heterotetramers. It depends on Se-Mo-molybdopterin cytosine dinucleotide as a cofactor.

It catalyses the reaction nicotinate + NADP(+) + H2O = 6-hydroxynicotinate + NADPH + H(+). Its pathway is cofactor degradation; nicotinate degradation; 6-hydroxynicotinate from nicotinate: step 1/1. With respect to regulation, reversibly inactivated by selenide and sulfide. Not inhibited by cyanide. Its function is as follows. Catalyzes the hydroxylation of nicotinate to 6-hydroxynicotinate. Also active against 2-pyrazinecarboxylic acid, but inactive against other nicotinate analogs. The protein is Nicotinate dehydrogenase large molybdopterin subunit (ndhL) of Eubacterium barkeri (Clostridium barkeri).